The primary structure comprises 272 residues: NADH-cytochrome b5 reductase 3 (272 aa).

Residues 11-123 enclose the FAD-binding FR-type domain; that stretch reads DIKYPLRLID…RGPNGLLVYQ (113 aa). K13 is subject to N6-acetyllysine. Phosphotyrosine is present on Y14. The residue at position 21 (K21) is an N6-acetyllysine. FAD is bound by residues R63, P64, Y65, V80, K82, and Y84. Residue K91 is modified to N6-acetyllysine. FAD contacts are provided by K97, M98, S99, and T156.

The protein belongs to the flavoprotein pyridine nucleotide cytochrome reductase family. In terms of assembly, component of a complex composed of cytochrome b5, NADH-cytochrome b5 reductase (CYB5R3) and MTARC2. Interacts with MTLN; the interaction is required to maintain cellular lipid composition and leads to stimulation of mitochondrial respiratory complex I activity. It depends on FAD as a cofactor.

The protein resides in the endoplasmic reticulum membrane. The protein localises to the mitochondrion outer membrane. The enzyme catalyses 2 Fe(III)-[cytochrome b5] + NADH = 2 Fe(II)-[cytochrome b5] + NAD(+) + H(+). Functionally, catalyzes the reduction of two molecules of cytochrome b5 using NADH as the electron donor. This chain is NADH-cytochrome b5 reductase 3 (CYB5R3), found in Sus scrofa (Pig).